Here is a 506-residue protein sequence, read N- to C-terminus: 2-isopropylmalate synthase (506 aa).

The Pyruvate carboxyltransferase domain occupies 4–266; sequence ILFMDTTLRD…EPSMTLKEIK (263 aa). Mn(2+) is bound by residues Asp-13, His-201, His-203, and Asn-237. A regulatory domain region spans residues 390-506; that stretch reads NITQLQVHFV…KLKSFIQLVK (117 aa).

The protein belongs to the alpha-IPM synthase/homocitrate synthase family. LeuA type 1 subfamily. As to quaternary structure, homodimer. Mn(2+) serves as cofactor.

It localises to the cytoplasm. The catalysed reaction is 3-methyl-2-oxobutanoate + acetyl-CoA + H2O = (2S)-2-isopropylmalate + CoA + H(+). It functions in the pathway amino-acid biosynthesis; L-leucine biosynthesis; L-leucine from 3-methyl-2-oxobutanoate: step 1/4. Functionally, catalyzes the condensation of the acetyl group of acetyl-CoA with 3-methyl-2-oxobutanoate (2-ketoisovalerate) to form 3-carboxy-3-hydroxy-4-methylpentanoate (2-isopropylmalate). In Bacillus cereus (strain ZK / E33L), this protein is 2-isopropylmalate synthase.